Reading from the N-terminus, the 254-residue chain is Sensory rhodopsin (254 aa).

Residues 1-4 lie on the Extracellular side of the membrane; that stretch reads MTGA. A helical membrane pass occupies residues 5–26; the sequence is VTSAYWLAAVAFLIGVGITAAL. Residues 27 to 35 lie on the Cytoplasmic side of the membrane; that stretch reads YAKLEGSRA. Residues 36-57 traverse the membrane as a helical segment; the sequence is RTRLAALAVIPGFAGLSYVGMA. Residues 58–71 are Extracellular-facing; that stretch reads LGIGTVTVNGAELV. The chain crosses the membrane as a helical span at residues 72–93; it reads GLRYVDWVVTTPLLVGFIGYNA. Residues 94–96 lie on the Cytoplasmic side of the membrane; it reads GAS. A helical membrane pass occupies residues 97-119; sequence RRAIAGVMIADALMIVFGAAAVV. Over 120-123 the chain is Extracellular; that stretch reads SGGT. A helical transmembrane segment spans residues 124–151; it reads LKWALFGVSALFHVSLFAYLYVIFPGGI. The Cytoplasmic segment spans residues 152-154; that stretch reads PDD. Residues 155 to 182 traverse the membrane as a helical segment; sequence PMQRGLFSLLKNHVGLLWLAYPFVWLMG. Over 183-190 the chain is Extracellular; that stretch reads PAGIGFTG. A helical transmembrane segment spans residues 191–223; the sequence is AVGAALTYAFLDVLAKVPYVYFFYARRQAFIDV. Position 206 is an N6-(retinylidene)lysine (Lys-206). The Cytoplasmic portion of the chain corresponds to 224-254; the sequence is TDSRAAAKGDGPAVGGEAPVATGDDAPTAAD. The disordered stretch occupies residues 231–254; it reads KGDGPAVGGEAPVATGDDAPTAAD.

This sequence belongs to the archaeal/bacterial/fungal opsin family.

Its subcellular location is the cell membrane. In terms of biological role, involved in the control of phototaxis. The chain is Sensory rhodopsin (sop) from Halorubrum sodomense.